The sequence spans 673 residues: UvrABC system protein B (673 aa).

One can recognise a Helicase ATP-binding domain in the interval 26-414 (EGLEDGLAHQ…GDEVVDQVVR (389 aa)). 39 to 46 (GVTGSGKT) is an ATP binding site. The short motif at 92-115 (YYDYYQPEAYVPSSDTFIEKDASV) is the Beta-hairpin element. The 167-residue stretch at 431-597 (QVDDLLSEIR…GLNKKVVDIL (167 aa)) folds into the Helicase C-terminal domain. One can recognise a UVR domain in the interval 633–668 (QQKIHELEEQMMQHAQNLEFEEAAQIRDQLHQLREL).

The protein belongs to the UvrB family. In terms of assembly, forms a heterotetramer with UvrA during the search for lesions. Interacts with UvrC in an incision complex.

It localises to the cytoplasm. Its function is as follows. The UvrABC repair system catalyzes the recognition and processing of DNA lesions. A damage recognition complex composed of 2 UvrA and 2 UvrB subunits scans DNA for abnormalities. Upon binding of the UvrA(2)B(2) complex to a putative damaged site, the DNA wraps around one UvrB monomer. DNA wrap is dependent on ATP binding by UvrB and probably causes local melting of the DNA helix, facilitating insertion of UvrB beta-hairpin between the DNA strands. Then UvrB probes one DNA strand for the presence of a lesion. If a lesion is found the UvrA subunits dissociate and the UvrB-DNA preincision complex is formed. This complex is subsequently bound by UvrC and the second UvrB is released. If no lesion is found, the DNA wraps around the other UvrB subunit that will check the other stand for damage. The chain is UvrABC system protein B from Salmonella typhi.